Reading from the N-terminus, the 284-residue chain is Rubber cis-polyprenyltransferase HRT2 (284 aa).

Asp-41 is a catalytic residue.

The protein belongs to the UPP synthase family. As to expression, predominantly expressed in latex.

The catalysed reaction is (cis-prenyl)(n)-diphosphate + isopentenyl diphosphate = (cis-prenyl)(n+1)-diphosphate + diphosphate. Its function is as follows. Proposed to be involved in rubber biosynthesis as a particle-bound rubber transferase responsible for the cis-1,4-polymerization of isoprene subunits. Probably requires additional factors for the production of high molecular mass rubber. This is Rubber cis-polyprenyltransferase HRT2 (HRT2) from Hevea brasiliensis (Para rubber tree).